Consider the following 346-residue polypeptide: LRP2-binding protein (346 aa).

The TPR repeat unit spans residues 58–91 (AMAYFLRGQLYFEEGWYEEALAQFEEIQEKDHQA). 6 Sel1-like repeats span residues 92–124 (IYQL…DSSC), 132–167 (FAAA…DNGN), 172–205 (VKAQ…GNGN), 206–241 (LESQ…ERGN), 242–276 (VYAQ…EVHD), and 296–331 (AMAS…RLNP).

As to quaternary structure, interacts with LRP2.

The protein resides in the cytoplasm. Functionally, may act as an adapter that regulates LRP2 function. The protein is LRP2-binding protein (Lrp2bp) of Rattus norvegicus (Rat).